The following is a 255-amino-acid chain: Testis-specific H1 histone (255 aa).

The tract at residues 1-54 (MEQALTGEAQSRWPRRGGSGAMAEAPGPSGESRGHSATQLPAEKTVGGPSRGCS) is disordered. The residue at position 56 (serine 56) is a Phosphoserine. A compositionally biased stretch (basic residues) spans 124 to 134 (KVPKPRRKPGR). The interval 124 to 255 (KVPKPRRKPG…PKKPAQRTIQ (132 aa)) is disordered. Residues 142 to 152 (RAPWRTPAAPR) show a composition bias toward low complexity. Composition is skewed to basic residues over residues 153–166 (SSRRRRQPLRKAAR) and 174–194 (RNARAKAKANARARRTRRARP). Basic and acidic residues-rich tracts occupy residues 195 to 230 (RAKEPPCARAKEEAGATAADEGRGQAVKEDTTPRSG) and 238 to 248 (KPREEKQEPKK).

Belongs to the histone H1/H5 family. As to expression, testis-specific.

The protein localises to the nucleus. It localises to the chromosome. Essential for normal spermatogenesis and male fertility. Required for proper cell restructuring and DNA condensation during the elongation phase of spermiogenesis. Involved in the histone-protamine transition of sperm chromatin and the subsequent production of functional sperm. Binds both double-stranded and single-stranded DNA, ATP and protamine-1. This Homo sapiens (Human) protein is Testis-specific H1 histone.